The chain runs to 142 residues: Small heat shock protein IbpB (142 aa).

A sHSP domain is found at 26–137 (TAEHQAFPPY…APQRIAISDR (112 aa)).

It belongs to the small heat shock protein (HSP20) family. As to quaternary structure, homodimer. Forms homomultimers of about 100-150 subunits at optimal growth temperatures. Conformation changes to oligomers at high temperatures or high ionic concentrations. The decrease in size of the multimers is accompanied by an increase in chaperone activity.

The protein localises to the cytoplasm. Functionally, associates with aggregated proteins, together with IbpA, to stabilize and protect them from irreversible denaturation and extensive proteolysis during heat shock and oxidative stress. Aggregated proteins bound to the IbpAB complex are more efficiently refolded and reactivated by the ATP-dependent chaperone systems ClpB and DnaK/DnaJ/GrpE. Its activity is ATP-independent. This Enterobacter sp. (strain 638) protein is Small heat shock protein IbpB.